A 288-amino-acid polypeptide reads, in one-letter code: MIILVLLISYSFGKTQDGKDQLSPNYPYGKMNKDVNFNKPFTSAVDSYQIQQYAENGVFSANQENYVRAKCKTCCRVIFASDYNYKTNTQFTDEDDKKGDERYVMDMEFDDKRSVRFRNGGYEQNILLRPLKQGNELQFFEFAPYRMYTSYAIPKRVHDIRGGANEGATLIIWPKNPPLSDAPGTRNQRFVYVHPYPTEWYPEYNSTTKYTQNGKTVIKTLKWPTYKRHFYLPYRLDVDLCYQARKATDGRSTWTGNKNLNTTSKSYQIIASRCSATEARQIFIPVFA.

Residues 1–15 form the signal peptide; it reads MIILVLLISYSFGKT. N-linked (GlcNAc...) asparagine glycosylation is found at asparagine 205 and asparagine 261.

In terms of assembly, heterodimer composed of a 170 kDa heavy subunit (hgl) and a 31/35 kDa light subunit (lgl); disulfide-linked.

It is found in the cell membrane. Its function is as follows. Light subunit of a heterodimeric lectin; the heavy subunit binds galactose and N-acetyl-D-galactosamine of host glycoproteins and thus mediates adhesion to host cells. The polypeptide is Galactose/N-acetyl-D-galactosamine lectin light subunit 1 (Entamoeba histolytica (strain ATCC 30459 / HM-1:IMSS / ABRM)).